The sequence spans 368 residues: Somatostatin receptor type 5 (368 aa).

Topologically, residues 1–45 (MEPLFPASPLTTWNTSSVVPSGSGDENGTLAGLGPSPGARAVVVP) are extracellular. Asparagine 14 and asparagine 27 each carry an N-linked (GlcNAc...) asparagine glycan. Residues 46 to 66 (VLYLLVCAVGLGGNTLVIYVV) form a helical membrane-spanning segment. Residues 67-77 (LRHAKMKTVTN) are Cytoplasmic-facing. Residues 78-98 (IYILNLAVADVLLMLGLPFVA) form a helical membrane-spanning segment. The Extracellular portion of the chain corresponds to 99–115 (TQNAISYWPFGPVLCRL). Cysteine 113 and cysteine 188 are joined by a disulfide. Residues 116 to 136 (VMTLDGINQFTSIFCLTVMSV) traverse the membrane as a helical segment. The Cytoplasmic segment spans residues 137 to 158 (DRYLAVVHPIRSARWRRPRVAK). The chain crosses the membrane as a helical span at residues 159–179 (LASAAVWAFSLVMSLPLVVFA). Over 180 to 207 (DIQEGWNTCNLSWPEPVGLWGAVFIIYT) the chain is Extracellular. Residue asparagine 189 is glycosylated (N-linked (GlcNAc...) asparagine). Residues 208–228 (SVLGFFGPLLVICLCYLLIVV) form a helical membrane-spanning segment. The Cytoplasmic portion of the chain corresponds to 229-251 (KLKASGVRVGSTRRRSERKVTRM). A helical transmembrane segment spans residues 252–272 (VVVVVLVFAGCWLPFFIVNIV). The Extracellular portion of the chain corresponds to 273-286 (NLAFALPEEPASAG). The helical transmembrane segment at 287–309 (AYFFVVVLSYANSCANPLLYGFL) threads the bilayer. The Cytoplasmic segment spans residues 310-368 (SDNFRQSFRKVLCLRKGYGAGAEDADATEPQPGPSSRLQEAMMPVRSCKANGLMQTSKL). A lipid anchor (S-palmitoyl cysteine; by ZDHHC5) is attached at cysteine 322.

Belongs to the G-protein coupled receptor 1 family. In terms of assembly, heterodimer with SSTR2. Heterodimerization with SSTR2 increases cell growth inhibition activity of SSTR2. Post-translationally, palmitoylated by ZDHHC5, but not ZDHHC3, nor ZDHHC8. Palmitoylation creates an additional intracellular loop which is thought to be important for efficient coupling to G-proteins and may target the protein to lipid rafts.

The protein localises to the cell membrane. Functionally, receptor for somatostatin 28 and to a lesser extent for somatostatin-14. The activity of this receptor is mediated by G proteins which inhibit adenylyl cyclase. Increases cell growth inhibition activity of SSTR2 following heterodimerization. This Bos taurus (Bovine) protein is Somatostatin receptor type 5 (SSTR5).